Here is a 378-residue protein sequence, read N- to C-terminus: Probable mannosyltransferase MNT3 (378 aa).

Over 1–4 the chain is Cytoplasmic; the sequence is MLWH. The chain crosses the membrane as a helical; Signal-anchor for type II membrane protein span at residues 5–25; the sequence is LVFILIAILLLTFSPKIESLF. Topologically, residues 26-378 are lumenal; the sequence is KSFTINKPTK…TNHFLNILHN (353 aa). 2 N-linked (GlcNAc...) asparagine glycosylation sites follow: Asn-73 and Asn-149.

Belongs to the glycosyltransferase 15 family.

The protein resides in the membrane. Transfers an alpha-D-mannosyl residue from GDP-mannose into lipid-linked oligosaccharide, forming an alpha-(1-&gt;2)-D-mannosyl-D-mannose linkage. The polypeptide is Probable mannosyltransferase MNT3 (MNT3) (Candida albicans (strain SC5314 / ATCC MYA-2876) (Yeast)).